A 216-amino-acid chain; its full sequence is Cytidylate kinase (216 aa).

Position 7–15 (7–15 (GPAASGKGT)) interacts with ATP.

This sequence belongs to the cytidylate kinase family. Type 1 subfamily.

The protein resides in the cytoplasm. It catalyses the reaction CMP + ATP = CDP + ADP. The enzyme catalyses dCMP + ATP = dCDP + ADP. The polypeptide is Cytidylate kinase (Methylocella silvestris (strain DSM 15510 / CIP 108128 / LMG 27833 / NCIMB 13906 / BL2)).